A 268-amino-acid polypeptide reads, in one-letter code: Urease accessory protein UreD (268 aa).

Belongs to the UreD family. As to quaternary structure, ureD, UreF and UreG form a complex that acts as a GTP-hydrolysis-dependent molecular chaperone, activating the urease apoprotein by helping to assemble the nickel containing metallocenter of UreC. The UreE protein probably delivers the nickel.

It localises to the cytoplasm. Its function is as follows. Required for maturation of urease via the functional incorporation of the urease nickel metallocenter. The polypeptide is Urease accessory protein UreD (Lysinibacillus sphaericus (strain C3-41)).